A 317-amino-acid polypeptide reads, in one-letter code: tRNA dimethylallyltransferase (317 aa).

Gly14–Thr21 is an ATP binding site. A substrate-binding site is contributed by Thr16 to Thr21. Residues Asp39 to Gln42 are interaction with substrate tRNA.

It belongs to the IPP transferase family. As to quaternary structure, monomer. It depends on Mg(2+) as a cofactor.

The catalysed reaction is adenosine(37) in tRNA + dimethylallyl diphosphate = N(6)-dimethylallyladenosine(37) in tRNA + diphosphate. Its function is as follows. Catalyzes the transfer of a dimethylallyl group onto the adenine at position 37 in tRNAs that read codons beginning with uridine, leading to the formation of N6-(dimethylallyl)adenosine (i(6)A). In Bacillus cereus (strain B4264), this protein is tRNA dimethylallyltransferase.